A 209-amino-acid polypeptide reads, in one-letter code: Orotate phosphoribosyltransferase (209 aa).

Residues Arg-96, Lys-100, His-102, and 122–130 (EDLISTGGS) contribute to the 5-phospho-alpha-D-ribose 1-diphosphate site. Ser-126 is an orotate binding site.

This sequence belongs to the purine/pyrimidine phosphoribosyltransferase family. PyrE subfamily. As to quaternary structure, homodimer. The cofactor is Mg(2+).

It catalyses the reaction orotidine 5'-phosphate + diphosphate = orotate + 5-phospho-alpha-D-ribose 1-diphosphate. Its pathway is pyrimidine metabolism; UMP biosynthesis via de novo pathway; UMP from orotate: step 1/2. Functionally, catalyzes the transfer of a ribosyl phosphate group from 5-phosphoribose 1-diphosphate to orotate, leading to the formation of orotidine monophosphate (OMP). In Listeria monocytogenes serovar 1/2a (strain ATCC BAA-679 / EGD-e), this protein is Orotate phosphoribosyltransferase.